We begin with the raw amino-acid sequence, 211 residues long: Probable endopeptidase cgR_2070 (211 aa).

A signal peptide spans 1-35 (MGKHRRNNSNATRKAVAASAVALGATAAIASPAQA). The region spanning 97–211 (ASTGQAIVDA…YMPFHSAVRF (115 aa)) is the NlpC/P60 domain. The Nucleophile role is filled by Cys127. His175 acts as the Proton acceptor in catalysis. The active site involves His187.

The protein belongs to the peptidase C40 family.

Its subcellular location is the secreted. This Corynebacterium glutamicum (strain R) protein is Probable endopeptidase cgR_2070.